The primary structure comprises 447 residues: Dihydroorotase (447 aa).

Positions 81 and 83 each coordinate Zn(2+). Substrate-binding positions include 83 to 85 (HFR) and Asn115. Zn(2+) is bound by residues Asp171, His198, and His252. Asn298 serves as a coordination point for substrate. Zn(2+) is bound at residue Asp325. Asp325 is an active-site residue. Residues His329 and 343 to 344 (FG) contribute to the substrate site.

Belongs to the metallo-dependent hydrolases superfamily. DHOase family. Class I DHOase subfamily. Zn(2+) is required as a cofactor.

It catalyses the reaction (S)-dihydroorotate + H2O = N-carbamoyl-L-aspartate + H(+). It participates in pyrimidine metabolism; UMP biosynthesis via de novo pathway; (S)-dihydroorotate from bicarbonate: step 3/3. Functionally, catalyzes the reversible cyclization of carbamoyl aspartate to dihydroorotate. This chain is Dihydroorotase, found in Ehrlichia canis (strain Jake).